We begin with the raw amino-acid sequence, 107 residues long: Phosphoribosyl-ATP pyrophosphatase (107 aa).

It belongs to the PRA-PH family.

It is found in the cytoplasm. It carries out the reaction 1-(5-phospho-beta-D-ribosyl)-ATP + H2O = 1-(5-phospho-beta-D-ribosyl)-5'-AMP + diphosphate + H(+). The protein operates within amino-acid biosynthesis; L-histidine biosynthesis; L-histidine from 5-phospho-alpha-D-ribose 1-diphosphate: step 2/9. The polypeptide is Phosphoribosyl-ATP pyrophosphatase (Bacillus anthracis (strain A0248)).